The primary structure comprises 255 residues: Probable ubiquitin carboxyl-terminal hydrolase (255 aa).

The 225-residue stretch at 13-237 (NWIPLEANPE…IRFNLMGLVK (225 aa)) folds into the UCH catalytic domain. The interval 16-21 (PLEANP) is interaction with ubiquitin. The active-site Nucleophile is C103. Catalysis depends on H177, which acts as the Proton donor. An interaction with ubiquitin region spans residues 227-232 (EIRFNL). The interval 235 to 255 (LVKKPNEESEEEEEKEKEETK) is disordered. Acidic residues predominate over residues 242 to 255 (ESEEEEEKEKEETK).

The protein belongs to the peptidase C12 family.

The protein resides in the cytoplasm. It catalyses the reaction Thiol-dependent hydrolysis of ester, thioester, amide, peptide and isopeptide bonds formed by the C-terminal Gly of ubiquitin (a 76-residue protein attached to proteins as an intracellular targeting signal).. Ubiquitin-protein hydrolase is involved both in the processing of ubiquitin precursors and of ubiquitinated proteins. This enzyme is a thiol protease that recognizes and hydrolyzes a peptide bond at the C-terminal glycine of either ubiquitin or nedd8. The polypeptide is Probable ubiquitin carboxyl-terminal hydrolase (uch1) (Dictyostelium discoideum (Social amoeba)).